Consider the following 178-residue polypeptide: Cytochrome b6-f complex iron-sulfur subunit (178 aa).

Residues 20–42 traverse the membrane as a helical segment; the sequence is LLTFGTATGVALGALYPVANYFM. The 97-residue stretch at 65–161 folds into the Rieske domain; sequence KTGWLATHQA…VDIEDDAVLV (97 aa). [2Fe-2S] cluster is bound by residues Cys107, His109, Cys125, and His128. A disulfide bridge links Cys112 with Cys127.

Belongs to the Rieske iron-sulfur protein family. The 4 large subunits of the cytochrome b6-f complex are cytochrome b6, subunit IV (17 kDa polypeptide, PetD), cytochrome f and the Rieske protein, while the 4 small subunits are PetG, PetL, PetM and PetN. The complex functions as a dimer. The cofactor is [2Fe-2S] cluster.

Its subcellular location is the cellular thylakoid membrane. The enzyme catalyses 2 oxidized [plastocyanin] + a plastoquinol + 2 H(+)(in) = 2 reduced [plastocyanin] + a plastoquinone + 4 H(+)(out). Its function is as follows. Component of the cytochrome b6-f complex, which mediates electron transfer between photosystem II (PSII) and photosystem I (PSI), cyclic electron flow around PSI, and state transitions. This chain is Cytochrome b6-f complex iron-sulfur subunit, found in Prochlorococcus marinus (strain MIT 9215).